We begin with the raw amino-acid sequence, 27 residues long: Equinin A (27 aa).

Basic and acidic residues predominate over residues 1 to 13 (AVDKGGGKAEKKD). The tract at residues 1-27 (AVDKGGGKAEKKDGNRKKKLAGGEGGG) is disordered.

It is found in the secreted. Peptide with unknown function. Does not show antimicrobial and hemolytic activities. The polypeptide is Equinin A (Actinia equina (Beadlet anemone)).